We begin with the raw amino-acid sequence, 158 residues long: 3-hydroxyacyl-[acyl-carrier-protein] dehydratase FabZ (158 aa).

H60 is an active-site residue.

The protein belongs to the thioester dehydratase family. FabZ subfamily.

The protein resides in the cytoplasm. The catalysed reaction is a (3R)-hydroxyacyl-[ACP] = a (2E)-enoyl-[ACP] + H2O. Its function is as follows. Involved in unsaturated fatty acids biosynthesis. Catalyzes the dehydration of short chain beta-hydroxyacyl-ACPs and long chain saturated and unsaturated beta-hydroxyacyl-ACPs. The protein is 3-hydroxyacyl-[acyl-carrier-protein] dehydratase FabZ of Zymomonas mobilis subsp. mobilis (strain ATCC 31821 / ZM4 / CP4).